A 357-amino-acid chain; its full sequence is UDP-N-acetylglucosamine--N-acetylmuramyl-(pentapeptide) pyrophosphoryl-undecaprenol N-acetylglucosamine transferase (357 aa).

Residues 11 to 13, Asn-120, Arg-161, Ser-188, and Gln-281 contribute to the UDP-N-acetyl-alpha-D-glucosamine site; that span reads TGG.

This sequence belongs to the glycosyltransferase 28 family. MurG subfamily.

It is found in the cell inner membrane. It carries out the reaction di-trans,octa-cis-undecaprenyl diphospho-N-acetyl-alpha-D-muramoyl-L-alanyl-D-glutamyl-meso-2,6-diaminopimeloyl-D-alanyl-D-alanine + UDP-N-acetyl-alpha-D-glucosamine = di-trans,octa-cis-undecaprenyl diphospho-[N-acetyl-alpha-D-glucosaminyl-(1-&gt;4)]-N-acetyl-alpha-D-muramoyl-L-alanyl-D-glutamyl-meso-2,6-diaminopimeloyl-D-alanyl-D-alanine + UDP + H(+). It participates in cell wall biogenesis; peptidoglycan biosynthesis. In terms of biological role, cell wall formation. Catalyzes the transfer of a GlcNAc subunit on undecaprenyl-pyrophosphoryl-MurNAc-pentapeptide (lipid intermediate I) to form undecaprenyl-pyrophosphoryl-MurNAc-(pentapeptide)GlcNAc (lipid intermediate II). This Prochlorococcus marinus (strain SARG / CCMP1375 / SS120) protein is UDP-N-acetylglucosamine--N-acetylmuramyl-(pentapeptide) pyrophosphoryl-undecaprenol N-acetylglucosamine transferase.